The chain runs to 541 residues: GTPase Obg (541 aa).

Residues 2-159 (PTFVDRVVLH…LDAVLELKSV (158 aa)) enclose the Obg domain. A disordered region spans residues 63-84 (HPHQRAGGGRPGQGSNRHGADG). The 173-residue stretch at 160–332 (ADVALVGFPS…LALALAELVA (173 aa)) folds into the OBG-type G domain. GTP-binding positions include 166 to 173 (GFPSAGKS), 191 to 195 (FTTLV), 213 to 216 (DVPG), 284 to 287 (NKVD), and 313 to 315 (STA). 2 residues coordinate Mg(2+): Ser-173 and Thr-193. Positions 350-427 (PRAVDEPDFT…IGAVTFDWEP (78 aa)) constitute an OCT domain. The tract at residues 497-541 (KRLTRAQRTALSDSADDFDDGAGFSDSAAFGDSGGSGGDADGGRG) is disordered. Positions 517 to 527 (GAGFSDSAAFG) are enriched in low complexity. Residues 528–541 (DSGGSGGDADGGRG) are compositionally biased toward gly residues.

This sequence belongs to the TRAFAC class OBG-HflX-like GTPase superfamily. OBG GTPase family. Monomer. The cofactor is Mg(2+).

Its subcellular location is the cytoplasm. Functionally, an essential GTPase which binds GTP, GDP and possibly (p)ppGpp with moderate affinity, with high nucleotide exchange rates and a fairly low GTP hydrolysis rate. Plays a role in control of the cell cycle, stress response, ribosome biogenesis and in those bacteria that undergo differentiation, in morphogenesis control. The protein is GTPase Obg of Parafrankia sp. (strain EAN1pec).